A 312-amino-acid chain; its full sequence is Ribosomal protein L11 methyltransferase (312 aa).

Positions 162, 183, 205, and 248 each coordinate S-adenosyl-L-methionine.

The protein belongs to the methyltransferase superfamily. PrmA family.

It localises to the cytoplasm. The enzyme catalyses L-lysyl-[protein] + 3 S-adenosyl-L-methionine = N(6),N(6),N(6)-trimethyl-L-lysyl-[protein] + 3 S-adenosyl-L-homocysteine + 3 H(+). Functionally, methylates ribosomal protein L11. The polypeptide is Ribosomal protein L11 methyltransferase (Exiguobacterium sp. (strain ATCC BAA-1283 / AT1b)).